Reading from the N-terminus, the 211-residue chain is uncharacterized protein (211 aa).

The segment at methionine 1–proline 43 is disordered.

This is an uncharacterized protein from Homo sapiens (Human).